Consider the following 258-residue polypeptide: MNAISLAVDQFVAVLTIHNPPANALSSRILEELSSCLDQCETDAGVRSIIIHGEGRFFSAGADIKEFTSLKGNEDSSLLAERGQQLMERIESFPKPIIAAIHGAALGGGLELAMACHIRIAAEDAKLGLPELNLGIIPGFAGTQRLPRYVGTAKALELIGSGEPISGKEALDLGLVSIGAKDEAEVIEKAKALAAKFAEKSPQTLASLLELLYSNKVYSYEGSLKLEAKRFGEAFESEDAKEGIQAFLEKRKPQFKGE.

It belongs to the enoyl-CoA hydratase/isomerase family.

The enzyme catalyses a (3S)-3-hydroxyacyl-CoA = a (2E)-enoyl-CoA + H2O. The catalysed reaction is a 4-saturated-(3S)-3-hydroxyacyl-CoA = a (3E)-enoyl-CoA + H2O. It participates in lipid metabolism; fatty acid beta-oxidation. In terms of biological role, involved in the degradation of long-chain fatty acids. The polypeptide is Probable enoyl-CoA hydratase (fadB) (Bacillus subtilis (strain 168)).